A 205-amino-acid polypeptide reads, in one-letter code: uncharacterized protein (205 aa).

Residues 10-75 (QDLLSAVDQQ…AANLMTVMTD (66 aa)) adopt a coiled-coil conformation. A disordered region spans residues 111-138 (PLSNTNNEQTSPPASGKTSETPKKNPTN). Residues 112–138 (LSNTNNEQTSPPASGKTSETPKKNPTN) show a composition bias toward polar residues.

Belongs to the asfivirus K205R family.

Its subcellular location is the host cytoplasm. In terms of biological role, induces host endoplasmic reticulum stress and consequently activates autophagy and NF-kappa-B signaling pathway. In turn, may induce autophagy-mediated STING1 degradation and innate immune evasion. This is an uncharacterized protein from Ornithodoros (relapsing fever ticks).